Reading from the N-terminus, the 385-residue chain is Histidinol-phosphate aminotransferase (385 aa).

At Lys-230 the chain carries N6-(pyridoxal phosphate)lysine.

Belongs to the class-II pyridoxal-phosphate-dependent aminotransferase family. Pyridoxal 5'-phosphate serves as cofactor.

It catalyses the reaction L-histidinol phosphate + 2-oxoglutarate = 3-(imidazol-4-yl)-2-oxopropyl phosphate + L-glutamate. It participates in amino-acid biosynthesis; L-histidine biosynthesis; L-histidine from 5-phospho-alpha-D-ribose 1-diphosphate: step 7/9. The sequence is that of Histidinol-phosphate aminotransferase from Saccharomyces cerevisiae (strain ATCC 204508 / S288c) (Baker's yeast).